Here is a 706-residue protein sequence, read N- to C-terminus: Elongation factor G 1 (706 aa).

The tr-type G domain occupies 8 to 290 (NRYRNIGICA…AVIDYLPAPT (283 aa)). GTP-binding positions include 17-24 (AHVDAGKT), 88-92 (DTPGH), and 142-145 (NKMD).

Belongs to the TRAFAC class translation factor GTPase superfamily. Classic translation factor GTPase family. EF-G/EF-2 subfamily.

It localises to the cytoplasm. Catalyzes the GTP-dependent ribosomal translocation step during translation elongation. During this step, the ribosome changes from the pre-translocational (PRE) to the post-translocational (POST) state as the newly formed A-site-bound peptidyl-tRNA and P-site-bound deacylated tRNA move to the P and E sites, respectively. Catalyzes the coordinated movement of the two tRNA molecules, the mRNA and conformational changes in the ribosome. The chain is Elongation factor G 1 from Pseudomonas aeruginosa (strain ATCC 15692 / DSM 22644 / CIP 104116 / JCM 14847 / LMG 12228 / 1C / PRS 101 / PAO1).